Consider the following 108-residue polypeptide: UPF0060 membrane protein YE2027 (108 aa).

4 helical membrane-spanning segments follow: residues 6-26 (LLFF…YLWL), 29-49 (GASM…VWLL), 59-79 (VYAA…RVVD), and 85-105 (LFDW…VAGW).

Belongs to the UPF0060 family.

It is found in the cell inner membrane. The chain is UPF0060 membrane protein YE2027 from Yersinia enterocolitica serotype O:8 / biotype 1B (strain NCTC 13174 / 8081).